The chain runs to 541 residues: Formimidoyltransferase-cyclodeaminase (541 aa).

A formiminotransferase N-subdomain region spans residues 1-181 (MSQLVECVPN…GATVAGARKF (181 aa)). His-82 acts as the For formimidoyltransferase activity in catalysis. 163–172 (GPSAFVPSWG) serves as a coordination point for folate. The interval 182 to 326 (LLAFNINLLS…PKERIIEYLV (145 aa)) is formiminotransferase C-subdomain. The interval 327-334 (PEAGPEQS) is linker. Residues 335 to 541 (LLHKPLRTFV…VLDRLEARQA (207 aa)) are cyclodeaminase/cyclohydrolase. The For cyclodeaminase activity role is filled by Asp-412. Ser-520 is subject to Phosphoserine.

It in the C-terminal section; belongs to the cyclodeaminase/cyclohydrolase family. The protein in the N-terminal section; belongs to the formiminotransferase family. In terms of assembly, homooctamer, including four polyglutamate binding sites. The subunits are arranged as a tetramer of dimers, and form a planar ring-shaped structure.

Its subcellular location is the cytoplasm. It is found in the cytosol. The protein localises to the golgi apparatus. The protein resides in the cytoskeleton. It localises to the microtubule organizing center. Its subcellular location is the centrosome. It is found in the centriole. The catalysed reaction is 5-formimidoyltetrahydrofolate + L-glutamate = N-formimidoyl-L-glutamate + (6S)-5,6,7,8-tetrahydrofolate. The enzyme catalyses 5-formimidoyltetrahydrofolate + 2 H(+) = (6R)-5,10-methenyltetrahydrofolate + NH4(+). It functions in the pathway amino-acid degradation; L-histidine degradation into L-glutamate; L-glutamate from N-formimidoyl-L-glutamate (transferase route): step 1/1. Functionally, folate-dependent enzyme, that displays both transferase and deaminase activity. Serves to channel one-carbon units from formiminoglutamate to the folate pool. Its function is as follows. Binds and promotes bundling of vimentin filaments originating from the Golgi. This is Formimidoyltransferase-cyclodeaminase (FTCD) from Sus scrofa (Pig).